A 235-amino-acid polypeptide reads, in one-letter code: Small ribosomal subunit protein uS3 (235 aa).

The KH type-2 domain maps to 39-107; that stretch reads IREILHKELK…DVVINIVEIR (69 aa). The tract at residues 215–235 is disordered; the sequence is QDKRMAEGDGGGSSRPRRDAA.

The protein belongs to the universal ribosomal protein uS3 family. As to quaternary structure, part of the 30S ribosomal subunit. Forms a tight complex with proteins S10 and S14.

In terms of biological role, binds the lower part of the 30S subunit head. Binds mRNA in the 70S ribosome, positioning it for translation. The sequence is that of Small ribosomal subunit protein uS3 from Rhodopseudomonas palustris (strain ATCC BAA-98 / CGA009).